The primary structure comprises 142 residues: Baculoviral IAP repeat-containing protein 5 (142 aa).

The BIR repeat unit spans residues 18 to 88; the sequence is RISTFKNWPF…KHSSGCAFLS (71 aa). Phosphoserine; by AURKC is present on Ser-20. The residue at position 23 (Lys-23) is an N6-acetyllysine. Phosphothreonine; by CDK1 and CDK15 is present on Thr-34. Thr-48 bears the Phosphothreonine mark. Residues Cys-57, Cys-60, His-77, and Cys-84 each contribute to the Zn(2+) site. N6-acetyllysine is present on residues Lys-90, Lys-110, Lys-112, and Lys-115. Residue Thr-117 is modified to Phosphothreonine; by AURKB. Lys-129 bears the N6-acetyllysine mark.

It belongs to the IAP family. As to quaternary structure, monomer or homodimer. Exists as a homodimer in the apo state and as a monomer in the CPC-bound state. The monomer protects cells against apoptosis more efficiently than the dimer. Only the dimeric form is capable of enhancing tubulin stability in cells. When phosphorylated, interacts with LAMTOR5/HBXIP; the resulting complex binds pro-CASP9, as well as active CASP9, but much less efficiently. Component of the chromosomal passenger complex (CPC) composed of at least BIRC5/survivin, CDCA8/borealin, INCENP, AURKB or AURKC; in the complex forms a triple-helix bundle-based subcomplex with INCENP and CDCA8. Interacts with JTB. Interacts (via BIR domain) with histone H3 phosphorylated at 'Thr-3' (H3pT3). Interacts with EVI5. Interacts with GTP-bound RAN in both the S and M phases of the cell cycle. Interacts with USP9X. Interacts with tubulin. Interacts with BIRC2/c-IAP1. The acetylated form at Lys-129 interacts with STAT3. The monomeric form deacetylated at Lys-129 interacts with XPO1/CRM1. The monomeric form interacts with XIAP/BIRC4. Both the dimeric and monomeric form can interact with DIABLO/SMAC. Interacts with BIRC6/bruce. Interacts with FBXL7; this interaction facilitates the polyubiquitination and subsequent proteasomal degradation of BIRC5 by the SCF(FBXL7) E3 ubiquitin-protein ligase complex. Post-translationally, ubiquitinated by the Cul9-RING ubiquitin-protein ligase complex, leading to its degradation. Ubiquitination is required for centrosomal targeting. Deubiquitinated by USP35 or USP38; leading to stabilization. Acetylation at Lys-129 results in its homodimerization, while deacetylation promotes the formation of monomers which heterodimerize with XPO1/CRM1 which facilitates its nuclear export. The acetylated form represses STAT3 transactivation. The dynamic equilibrium between its acetylation and deacetylation at Lys-129 determines its interaction with XPO1/CRM1, its subsequent subcellular localization, and its ability to inhibit STAT3 transactivation. In terms of processing, in vitro phosphorylation at Thr-117 by AURKB prevents interaction with INCENP and localization to mitotic chromosomes. Phosphorylation at Thr-48 by CK2 is critical for its mitotic and anti-apoptotic activities. Phosphorylation at Thr-34 by CDK15 is critical for its anti-apoptotic activity. Phosphorylation at Ser-20 by AURKC is critical for regulation of proper chromosome alignment and segregation, and possibly cytokinesis.

Its subcellular location is the cytoplasm. It localises to the nucleus. The protein resides in the chromosome. It is found in the centromere. The protein localises to the cytoskeleton. Its subcellular location is the spindle. It localises to the kinetochore. The protein resides in the midbody. Multitasking protein that has dual roles in promoting cell proliferation and preventing apoptosis. Component of a chromosome passage protein complex (CPC) which is essential for chromosome alignment and segregation during mitosis and cytokinesis. Acts as an important regulator of the localization of this complex; directs CPC movement to different locations from the inner centromere during prometaphase to midbody during cytokinesis and participates in the organization of the center spindle by associating with polymerized microtubules. Involved in the recruitment of CPC to centromeres during early mitosis via association with histone H3 phosphorylated at 'Thr-3' (H3pT3) during mitosis. The complex with RAN plays a role in mitotic spindle formation by serving as a physical scaffold to help deliver the RAN effector molecule TPX2 to microtubules. May counteract a default induction of apoptosis in G2/M phase. The acetylated form represses STAT3 transactivation of target gene promoters. May play a role in neoplasia. Inhibitor of CASP3 and CASP7. Essential for the maintenance of mitochondrial integrity and function. This chain is Baculoviral IAP repeat-containing protein 5 (BIRC5), found in Sus scrofa (Pig).